The following is a 107-amino-acid chain: MQLSTTPTLEGFTITEYCGVVTGEAILGANIFRDFFAGVRDIVGGRSGAYEKELRKARLIAFKELEEQAKELGANAVVGIDIDYETVGKDSSMLMVTVSGTAVKVSR.

This sequence belongs to the UPF0145 family.

The protein is UPF0145 protein Spro_1658 of Serratia proteamaculans (strain 568).